The sequence spans 34 residues: MCIPCFTTNPNMAAKCNACCGSRRGSCRGPQCIC.

Cystine bridges form between Cys2-Cys19, Cys5-Cys27, Cys16-Cys32, and Cys20-Cys34.

Belongs to the short scorpion toxin superfamily. Chloride channel inhibitor family. Expressed by the venom gland.

It localises to the secreted. In terms of biological role, toxin with unknown function in healthy organisms. On glioma cells, interacts with chloride channels (probably ClC-3/CLCN3) and MMP2 at the surface of glioma cells. This complex is then internalized via caveolae, thus inhibiting the chloride channels necessary for cell shrinkage and tumor propagation. Inhibits migration and invasion of U87 glioma cells expressing CLCN3/ClC-3 voltage-gated chloride channels. This Androctonus australis (Sahara scorpion) protein is Chlorotoxin-like peptide AaCtx.